A 94-amino-acid chain; its full sequence is Co-chaperonin GroES (94 aa).

Belongs to the GroES chaperonin family. Heptamer of 7 subunits arranged in a ring. Interacts with the chaperonin GroEL.

It is found in the cytoplasm. In terms of biological role, together with the chaperonin GroEL, plays an essential role in assisting protein folding. The GroEL-GroES system forms a nano-cage that allows encapsulation of the non-native substrate proteins and provides a physical environment optimized to promote and accelerate protein folding. GroES binds to the apical surface of the GroEL ring, thereby capping the opening of the GroEL channel. In Streptococcus mitis, this protein is Co-chaperonin GroES.